The primary structure comprises 79 residues: RNA-binding protein Hfq (79 aa).

Positions 10–70 (DVFLNTVRKQ…ISTIMPGQPV (61 aa)) constitute a Sm domain.

The protein belongs to the Hfq family. As to quaternary structure, homohexamer.

In terms of biological role, RNA chaperone that binds small regulatory RNA (sRNAs) and mRNAs to facilitate mRNA translational regulation in response to envelope stress, environmental stress and changes in metabolite concentrations. Also binds with high specificity to tRNAs. The protein is RNA-binding protein Hfq of Bartonella quintana (strain Toulouse) (Rochalimaea quintana).